Consider the following 402-residue polypeptide: Phosphoglycerate kinase (402 aa).

Residues 24–26, arginine 40, 63–66, arginine 122, and arginine 155 each bind substrate; these read DFN and HFGR. ATP-binding positions include lysine 206, glycine 297, glutamate 328, and 357 to 360; that span reads GGDS.

This sequence belongs to the phosphoglycerate kinase family. Monomer.

The protein localises to the cytoplasm. It catalyses the reaction (2R)-3-phosphoglycerate + ATP = (2R)-3-phospho-glyceroyl phosphate + ADP. It participates in carbohydrate degradation; glycolysis; pyruvate from D-glyceraldehyde 3-phosphate: step 2/5. This chain is Phosphoglycerate kinase, found in Synechococcus sp. (strain ATCC 27144 / PCC 6301 / SAUG 1402/1) (Anacystis nidulans).